The primary structure comprises 458 residues: UPF0210 protein MmarC6_1246 (458 aa).

This sequence belongs to the UPF0210 family.

This Methanococcus maripaludis (strain C6 / ATCC BAA-1332) protein is UPF0210 protein MmarC6_1246.